The primary structure comprises 293 residues: Decaprenyl diphosphate synthase (293 aa).

The tract at residues 1–24 is disordered; it reads MATTRGKKTYPQLPPAPDDYPTFP. D73 is a catalytic residue. A Mg(2+)-binding site is contributed by D73. Substrate-binding positions include 74–77, W78, R86, H90, and 118–120; these read GNGR and STE. Residue N121 is the Proton acceptor of the active site. Substrate is bound by residues W122, R124, R241, and 247 to 249; that span reads RAS. Residue E260 coordinates Mg(2+).

This sequence belongs to the UPP synthase family. Homodimer. The cofactor is Mg(2+).

The protein resides in the cell membrane. The catalysed reaction is (2Z,6E)-farnesyl diphosphate + 7 isopentenyl diphosphate = (2Z,6Z,10Z,14Z,18Z,22Z,26Z,30Z,34E)-decaprenyl diphosphate + 7 diphosphate. It catalyses the reaction n isopentenyl diphosphate + (2E,6E)-farnesyl diphosphate = a di-trans,poly-cis-polyprenyl diphosphate + n diphosphate. Catalyzes the sequential condensation of isopentenyl diphosphate (IPP) in the cis configuration with (2Z,6E)-farnesyl diphosphate (Z-FPP or EZ-FPP) generating the 50 carbon product trans,polycis-decaprenyl diphosphate. When (2E,6E)-farnesyl diphosphate (E-FPP or EE-FPP) is used in vitro, both primary products decaprenyl diphosphate and heptaprenyl diphosphate are synthesized. It is probably due to the fact that M.smegmatis synthesizes both (2E,6E,10E)-geranylgeranyl diphosphate (EEE-GGPP) and (2E,6E,10Z)-geranylgeranyl diphosphate (EEZ-GGPP). Can also accept many different allylic substrates, including E-geranyl diphosphate (E-GPP), neryl diphosphate (NPP), and all-trans-geranyl-geranyl diphosphate. This Mycolicibacterium smegmatis (strain ATCC 700084 / mc(2)155) (Mycobacterium smegmatis) protein is Decaprenyl diphosphate synthase (uppS).